The sequence spans 310 residues: Conjugation stage-specific protein (310 aa).

It belongs to the archaeal Rpo3/eukaryotic RPB3 RNA polymerase subunit family.

It localises to the nucleus. May be a stage-specific RNA polymerase subunit. In Tetrahymena thermophila, this protein is Conjugation stage-specific protein (CNJC).